Reading from the N-terminus, the 428-residue chain is Putative FBD-associated F-box protein At5g56390 (428 aa).

Residues 2-50 (DKISQLHDELLLGILSLLPNAKDVVATMVLSKRWRYLWMMVPSLVYDDS) form the F-box domain. An FBD domain is found at 344-394 (CWNETSLVPEYLLPSLETFEWVDYEGTKTEKQVVAFILRIASCLKQATIVS).

In Arabidopsis thaliana (Mouse-ear cress), this protein is Putative FBD-associated F-box protein At5g56390.